A 628-amino-acid chain; its full sequence is NUAK family SNF1-like kinase 2 (628 aa).

The residue at position 1 (Met1) is an N-acetylmethionine. Residues 53-303 (YEFLETLGKG…LEDVASHWWV (251 aa)) form the Protein kinase domain. ATP contacts are provided by residues 59-67 (LGKGTYGKV) and Lys81. Asp175 (proton acceptor) is an active-site residue. At Thr208 the chain carries Phosphothreonine. 2 disordered regions span residues 355-492 (KQHA…PQAS) and 522-570 (GSLD…PLRG). Residues 428-444 (ELSPIPVSPGQAAPPLP) show a composition bias toward pro residues. Ser435 carries the post-translational modification Phosphoserine. The span at 457-469 (SGYYSSPEPSESG) shows a compositional bias: low complexity. Phosphoserine is present on residues Ser523, Ser544, Ser547, and Ser573.

Belongs to the protein kinase superfamily. CAMK Ser/Thr protein kinase family. SNF1 subfamily. Mg(2+) serves as cofactor. Phosphorylated at Thr-208 by STK11/LKB1 in complex with STE20-related adapter-alpha (STRADA) pseudo kinase and CAB39. Autophosphorylation is also possible at Thr-208.

It catalyses the reaction L-seryl-[protein] + ATP = O-phospho-L-seryl-[protein] + ADP + H(+). It carries out the reaction L-threonyl-[protein] + ATP = O-phospho-L-threonyl-[protein] + ADP + H(+). Activated by phosphorylation on Thr-208. Functionally, stress-activated kinase involved in tolerance to glucose starvation. Induces cell-cell detachment by increasing F-actin conversion to G-actin. Expression is induced by CD95 or TNF-alpha, via NF-kappa-B. Protects cells from CD95-mediated apoptosis and is required for the increased motility and invasiveness of CD95-activated tumor cells. Phosphorylates LATS1 and LATS2. Plays a key role in neural tube closure during embryonic development through LATS2 phosphorylation and regulation of the nuclear localization of YAP1 a critical downstream regulatory target in the Hippo signaling pathway. This is NUAK family SNF1-like kinase 2 from Pongo abelii (Sumatran orangutan).